The chain runs to 104 residues: Flagellar hook-basal body complex protein FliE (104 aa).

The protein belongs to the FliE family.

It is found in the bacterial flagellum basal body. The protein is Flagellar hook-basal body complex protein FliE of Edwardsiella ictaluri (strain 93-146).